The chain runs to 30 residues: Cyclotide cter-H (30 aa).

The segment at residues 1 to 30 (GLPCGESCVFIPCITTVVGCSCKNKVCYND) is a cross-link (cyclopeptide (Gly-Asp)). 3 disulfides stabilise this stretch: C4-C20, C8-C22, and C13-C27.

Contains 3 disulfide bonds. In terms of processing, this is a cyclic peptide.

Its function is as follows. Probably participates in a plant defense mechanism. This chain is Cyclotide cter-H, found in Clitoria ternatea (Butterfly pea).